A 389-amino-acid chain; its full sequence is Geranylgeranyl pyrophosphate synthase A (389 aa).

Isopentenyl diphosphate-binding residues include Lys99, Arg102, and His131. The Mg(2+) site is built by Asp138 and Asp142. Arg147 is a binding site for dimethylallyl diphosphate. Arg148 lines the isopentenyl diphosphate pocket.

The protein belongs to the FPP/GGPP synthase family. It depends on Mg(2+) as a cofactor.

The protein resides in the cytoplasm. It catalyses the reaction isopentenyl diphosphate + (2E)-geranyl diphosphate = (2E,6E)-farnesyl diphosphate + diphosphate. The enzyme catalyses isopentenyl diphosphate + (2E,6E)-farnesyl diphosphate = (2E,6E,10E)-geranylgeranyl diphosphate + diphosphate. It functions in the pathway isoprenoid biosynthesis; farnesyl diphosphate biosynthesis; farnesyl diphosphate from geranyl diphosphate and isopentenyl diphosphate: step 1/1. The protein operates within isoprenoid biosynthesis; geranylgeranyl diphosphate biosynthesis; geranylgeranyl diphosphate from farnesyl diphosphate and isopentenyl diphosphate: step 1/1. Its function is as follows. Catalyzes the trans-addition of the 2 molecules of isopentenyl diphosphate (IPP) onto geranyl diphosphate (GDP) to form geranylgeranyl pyrophosphate (GGDP). Does not catalyze the conversion of dimethylallyl diphosphate (DMAPP). The polypeptide is Geranylgeranyl pyrophosphate synthase A (GGS-A) (Phomopsis amygdali (Fusicoccum amygdali)).